Consider the following 99-residue polypeptide: Large ribosomal subunit protein eL30 (99 aa).

The protein belongs to the eukaryotic ribosomal protein eL30 family. As to quaternary structure, part of the 50S ribosomal subunit.

This Pyrococcus furiosus (strain ATCC 43587 / DSM 3638 / JCM 8422 / Vc1) protein is Large ribosomal subunit protein eL30.